The sequence spans 707 residues: Leucine-rich repeat neuronal protein 3 (707 aa).

The signal sequence occupies residues 1–22 (MKDAPLQIHVLLGLAITALVQA). The region spanning 23–69 (GDKKVDCPQLCTCEIRPWFTPRSIYMEASTVDCNDLGLLNFPARLPA) is the LRRNT domain. The Extracellular segment spans residues 23–626 (GDKKVDCPQL…DGKENGKSHT (604 aa)). LRR repeat units follow at residues 70–91 (DTQI…TDFP), 93–114 (NLTG…NVQK), 117–138 (QLLS…CLYG), 141–162 (NLQE…AFVG), 165–186 (NLLR…WFEA), 189–210 (NLEI…NFQP), 213–234 (KLRS…ALVG), 237–258 (NLES…ALQK), 261–282 (NLKF…DFSN), 285–304 (HLKE…DSLA), 310–332 (DLRK…AFFR), and 335–358 (KLES…ESLP). Residues N93 and N103 are each glycosylated (N-linked (GlcNAc...) asparagine). N-linked (GlcNAc...) asparagine glycosylation occurs at N223. Residues 368–421 (NPIRCDCVIRWINMNKTNIRFMEPDSLFCVDPPEFQGQNVRQVHFRDMMEICLP) form the LRRCT domain. N382 is a glycosylation site (N-linked (GlcNAc...) asparagine). Residues 421–514 (PLIAPESFPS…DLKSIMIKVG (94 aa)) enclose the Ig-like C2-type domain. Residues C444 and C496 are joined by a disulfide bond. N-linked (GlcNAc...) asparagine glycans are attached at residues N522, N579, and N608. The 92-residue stretch at 523–614 (GSLNIKIRDI…QCVNVTTKSL (92 aa)) folds into the Fibronectin type-III domain. Residues 627–647 (VFVACVGGLLGIIGVMCLFGC) form a helical membrane-spanning segment. The Cytoplasmic segment spans residues 648-707 (VSQEGNCENEHSYTVNHCHKPTLAFSELYPPLINLWESSKEKPASLEVKATAIGVPTSMS).

It is found in the membrane. This chain is Leucine-rich repeat neuronal protein 3 (Lrrn3), found in Rattus norvegicus (Rat).